The chain runs to 544 residues: Chaperonin GroEL (544 aa).

Residues T29–P32, K50, D86–T90, G414, D477–A479, and D493 contribute to the ATP site.

The protein belongs to the chaperonin (HSP60) family. Forms a cylinder of 14 subunits composed of two heptameric rings stacked back-to-back. Interacts with the co-chaperonin GroES.

The protein resides in the cytoplasm. It catalyses the reaction ATP + H2O + a folded polypeptide = ADP + phosphate + an unfolded polypeptide.. In terms of biological role, together with its co-chaperonin GroES, plays an essential role in assisting protein folding. The GroEL-GroES system forms a nano-cage that allows encapsulation of the non-native substrate proteins and provides a physical environment optimized to promote and accelerate protein folding. The sequence is that of Chaperonin GroEL from Hydrogenovibrio crunogenus (strain DSM 25203 / XCL-2) (Thiomicrospira crunogena).